A 343-amino-acid chain; its full sequence is Large ribosomal subunit protein uL3 (343 aa).

2 disordered regions span residues 1–31 (MGHRKLASPRRGSAGVRPRKRASEILPTPRS) and 238–262 (KGSRKVGARGPSFSTPSYVPQPGQM).

It belongs to the universal ribosomal protein uL3 family. In terms of assembly, part of the 50S ribosomal subunit. Forms a cluster with proteins L14 and L24e.

One of the primary rRNA binding proteins, it binds directly near the 3'-end of the 23S rRNA, where it nucleates assembly of the 50S subunit. The sequence is that of Large ribosomal subunit protein uL3 from Sulfurisphaera tokodaii (strain DSM 16993 / JCM 10545 / NBRC 100140 / 7) (Sulfolobus tokodaii).